The chain runs to 150 residues: Histone H3-like centromeric protein A (150 aa).

The tract at residues 1–56 (MRPGSTPASRRKSRPPRRVSPPLPTTSTRSPGRPSAPEQRKAPRATPKKRFRPGTR) is disordered. The span at 25–37 (TTSTRSPGRPSAP) shows a compositional bias: low complexity. Over residues 42 to 53 (APRATPKKRFRP) the composition is skewed to basic residues. The tract at residues 53 to 150 (PGTRALMEIR…RIRGVTEGLG (98 aa)) is H3-like.

Belongs to the histone H3 family. In terms of assembly, component of centromeric nucleosomes, where DNA is wrapped around a histone octamer core. The octamer contains two molecules each of H2A, H2B, CENPA and H4 assembled in one CENPA-H4 heterotetramer and two H2A-H2B heterodimers. CENPA modulates the DNA-binding characteristics of nucleosomes so that protruding DNA ends have higher flexibility than in nucleosomes containing conventional histone H3.

The protein localises to the nucleus. It is found in the chromosome. The protein resides in the centromere. In terms of biological role, histone H3-like nucleosomal protein that is specifically found in centromeric nucleosomes. Replaces conventional H3 in the nucleosome core of centromeric chromatin that serves as an assembly site for the inner kinetochore. The presence of CENPA subtly modifies the nucleosome structure and the way DNA is wrapped around the nucleosome and gives rise to protruding DNA ends that are less well-ordered and rigid compared to nucleosomes containing histone H3. May serve as an epigenetic mark that propagates centromere identity through replication and cell division. Required for recruitment and assembly of kinetochore proteins, and as a consequence required for progress through mitosis, chromosome segregation and cytokinesis. This Xenopus tropicalis (Western clawed frog) protein is Histone H3-like centromeric protein A (cenpa).